The chain runs to 203 residues: Peptide deformylase (203 aa).

Fe cation contacts are provided by cysteine 121 and histidine 163. Residue glutamate 164 is part of the active site. Histidine 167 lines the Fe cation pocket.

This sequence belongs to the polypeptide deformylase family. Fe(2+) is required as a cofactor.

It carries out the reaction N-terminal N-formyl-L-methionyl-[peptide] + H2O = N-terminal L-methionyl-[peptide] + formate. In terms of biological role, removes the formyl group from the N-terminal Met of newly synthesized proteins. Requires at least a dipeptide for an efficient rate of reaction. N-terminal L-methionine is a prerequisite for activity but the enzyme has broad specificity at other positions. The sequence is that of Peptide deformylase from Prochlorococcus marinus (strain SARG / CCMP1375 / SS120).